Consider the following 228-residue polypeptide: Ribonuclease H (228 aa).

In terms of domain architecture, RNase H type-1 spans 2 to 142 (GPMRTIVYAD…ADRLATLGRR (141 aa)). Residues D11, E49, D71, and D134 each contribute to the Mg(2+) site.

Belongs to the RNase H family. In terms of assembly, monomer. Mg(2+) serves as cofactor.

The protein localises to the cytoplasm. It carries out the reaction Endonucleolytic cleavage to 5'-phosphomonoester.. Its function is as follows. Endonuclease that specifically degrades the RNA of RNA-DNA hybrids. The sequence is that of Ribonuclease H from Methylorubrum extorquens (strain PA1) (Methylobacterium extorquens).